The primary structure comprises 264 residues: 3-methyl-2-oxobutanoate hydroxymethyltransferase (264 aa).

Mg(2+) is bound by residues Asp45 and Asp84. 3-methyl-2-oxobutanoate-binding positions include 45–46, Asp84, and Lys112; that span reads DS. Glu114 provides a ligand contact to Mg(2+). The active-site Proton acceptor is Glu181.

Belongs to the PanB family. As to quaternary structure, homodecamer; pentamer of dimers. The cofactor is Mg(2+).

It localises to the cytoplasm. The catalysed reaction is 3-methyl-2-oxobutanoate + (6R)-5,10-methylene-5,6,7,8-tetrahydrofolate + H2O = 2-dehydropantoate + (6S)-5,6,7,8-tetrahydrofolate. It functions in the pathway cofactor biosynthesis; (R)-pantothenate biosynthesis; (R)-pantoate from 3-methyl-2-oxobutanoate: step 1/2. Catalyzes the reversible reaction in which hydroxymethyl group from 5,10-methylenetetrahydrofolate is transferred onto alpha-ketoisovalerate to form ketopantoate. The polypeptide is 3-methyl-2-oxobutanoate hydroxymethyltransferase (Shewanella putrefaciens (strain CN-32 / ATCC BAA-453)).